The sequence spans 378 residues: Mevalonate kinase (378 aa).

ATP-binding positions include lysine 10, serine 138, and 143–149 (GSGLGSS). Residues serine 149 and glutamate 193 each contribute to the Mg(2+) site. Residue aspartate 204 is the Proton acceptor of the active site.

This sequence belongs to the GHMP kinase family. Mevalonate kinase subfamily. Mg(2+) is required as a cofactor.

It is found in the cytoplasm. The enzyme catalyses (R)-mevalonate + ATP = (R)-5-phosphomevalonate + ADP + H(+). It participates in isoprenoid biosynthesis; isopentenyl diphosphate biosynthesis via mevalonate pathway; isopentenyl diphosphate from (R)-mevalonate: step 1/3. Its activity is inhibited in vitro by geranyl pyrophosphate (GPP) and farnesyl pyrophosphate (FPP) that bind competitively at the ATP-binding site on the enzyme. In terms of biological role, catalyzes the phosphorylation of mevalonate to mevalonate 5-phosphate, a key step in isoprenoid and cholesterol biosynthesis. This is Mevalonate kinase from Arabidopsis thaliana (Mouse-ear cress).